Reading from the N-terminus, the 203-residue chain is Small ribosomal subunit protein uS4c (203 aa).

The disordered stretch occupies residues 18 to 42 (LPGLTSKRPKNRKDSMNMNRSSSRK). Positions 33-42 (MNMNRSSSRK) are enriched in polar residues. An S4 RNA-binding domain is found at 91 to 152 (MRLDNIIFRL…QPRLRAIIKK (62 aa)).

Belongs to the universal ribosomal protein uS4 family. As to quaternary structure, part of the 30S ribosomal subunit. Contacts protein S5. The interaction surface between S4 and S5 is involved in control of translational fidelity.

It localises to the plastid. The protein resides in the chloroplast. In terms of biological role, one of the primary rRNA binding proteins, it binds directly to 16S rRNA where it nucleates assembly of the body of the 30S subunit. Functionally, with S5 and S12 plays an important role in translational accuracy. The polypeptide is Small ribosomal subunit protein uS4c (rps4) (Pinus koraiensis (Korean pine)).